Reading from the N-terminus, the 332-residue chain is L-lactate dehydrogenase A chain (332 aa).

An N-acetylalanine modification is found at Ala2. At Lys5 the chain carries N6-acetyllysine; alternate. Position 5 is an N6-succinyllysine; alternate (Lys5). Lys14 is modified (N6-acetyllysine). 29–57 (GAVGMACAISILMKDLADELALVDVIEDK) is a binding site for NAD(+). At Lys57 the chain carries N6-acetyllysine; alternate. A Glycyl lysine isopeptide (Lys-Gly) (interchain with G-Cter in SUMO2); alternate cross-link involves residue Lys57. Lys81 is modified (N6-acetyllysine). NAD(+) is bound at residue Arg99. Arg106 is a substrate binding site. At Lys118 the chain carries N6-acetyllysine; alternate. Lys118 carries the post-translational modification N6-succinyllysine; alternate. Lys126 carries the post-translational modification N6-acetyllysine. An NAD(+)-binding site is contributed by Asn138. Substrate-binding residues include Asn138 and Arg169. Catalysis depends on His193, which acts as the Proton acceptor. Ser213 is subject to Phosphoserine. N6-acetyllysine occurs at positions 224 and 232. A Phosphotyrosine modification is found at Tyr239. Lys243 bears the N6-acetyllysine mark. Thr248 is a substrate binding site. At Thr309 the chain carries Phosphothreonine. Lys318 bears the N6-acetyllysine; alternate mark. Lys318 bears the N6-succinyllysine; alternate mark. Thr322 carries the post-translational modification Phosphothreonine.

Belongs to the LDH/MDH superfamily. LDH family. In terms of assembly, homotetramer. Interacts with PTEN upstream reading frame protein MP31. ISGylated.

It is found in the cytoplasm. The enzyme catalyses (S)-lactate + NAD(+) = pyruvate + NADH + H(+). It functions in the pathway fermentation; pyruvate fermentation to lactate; (S)-lactate from pyruvate: step 1/1. Its function is as follows. Interconverts simultaneously and stereospecifically pyruvate and lactate with concomitant interconversion of NADH and NAD(+). This Rattus norvegicus (Rat) protein is L-lactate dehydrogenase A chain (Ldha).